Here is a 72-residue protein sequence, read N- to C-terminus: MANASGSMSAVRETMDVLLEISRLLNTGLDMETLSICVRLCEQGINPEALSSVIKELRRASETLKASESTAS.

Belongs to the MOZART1 family. In terms of assembly, part of the gamma-tubulin complex.

It localises to the cytoplasm. The protein localises to the cytoskeleton. The protein resides in the microtubule organizing center. It is found in the centrosome. Its subcellular location is the spindle. In terms of biological role, required for gamma-tubulin complex recruitment to the centrosome. This Xenopus tropicalis (Western clawed frog) protein is Mitotic-spindle organizing protein 1 (mzt1).